Consider the following 274-residue polypeptide: Thiamine kinase (274 aa).

The protein belongs to the thiamine kinase family.

The enzyme catalyses thiamine + ATP = thiamine phosphate + ADP + H(+). It participates in cofactor biosynthesis; thiamine diphosphate biosynthesis; thiamine phosphate from thiamine: step 1/1. In terms of biological role, catalyzes the ATP-dependent phosphorylation of thiamine to thiamine phosphate. Is involved in thiamine salvage. The protein is Thiamine kinase of Escherichia coli O157:H7.